The following is a 266-amino-acid chain: 3-methyl-2-oxobutanoate hydroxymethyltransferase 2 (266 aa).

Residues D45 and D84 each contribute to the Mg(2+) site. 3-methyl-2-oxobutanoate-binding positions include 45-46, D84, and K112; that span reads DS. E114 is a binding site for Mg(2+). Residue E181 is the Proton acceptor of the active site.

Belongs to the PanB family. Homodecamer; pentamer of dimers. Mg(2+) is required as a cofactor.

It localises to the cytoplasm. It carries out the reaction 3-methyl-2-oxobutanoate + (6R)-5,10-methylene-5,6,7,8-tetrahydrofolate + H2O = 2-dehydropantoate + (6S)-5,6,7,8-tetrahydrofolate. Its pathway is cofactor biosynthesis; (R)-pantothenate biosynthesis; (R)-pantoate from 3-methyl-2-oxobutanoate: step 1/2. Its function is as follows. Catalyzes the reversible reaction in which hydroxymethyl group from 5,10-methylenetetrahydrofolate is transferred onto alpha-ketoisovalerate to form ketopantoate. The chain is 3-methyl-2-oxobutanoate hydroxymethyltransferase 2 from Pseudomonas entomophila (strain L48).